We begin with the raw amino-acid sequence, 398 residues long: S-adenosylmethionine synthase (398 aa).

Position 16 (histidine 16) interacts with ATP. Aspartate 18 serves as a coordination point for Mg(2+). Glutamate 44 serves as a coordination point for K(+). Positions 57 and 100 each coordinate L-methionine. Residues 100 to 110 are flexible loop; that stretch reads QSPDIAQGVNE. Residues 175-177, 242-243, aspartate 251, 257-258, alanine 274, and lysine 278 each bind ATP; these read DAK, RF, and RK. Position 251 (aspartate 251) interacts with L-methionine. L-methionine is bound at residue lysine 282.

The protein belongs to the AdoMet synthase family. Homotetramer; dimer of dimers. Requires Mg(2+) as cofactor. It depends on K(+) as a cofactor.

The protein resides in the cytoplasm. The enzyme catalyses L-methionine + ATP + H2O = S-adenosyl-L-methionine + phosphate + diphosphate. It participates in amino-acid biosynthesis; S-adenosyl-L-methionine biosynthesis; S-adenosyl-L-methionine from L-methionine: step 1/1. Its function is as follows. Catalyzes the formation of S-adenosylmethionine (AdoMet) from methionine and ATP. The overall synthetic reaction is composed of two sequential steps, AdoMet formation and the subsequent tripolyphosphate hydrolysis which occurs prior to release of AdoMet from the enzyme. The polypeptide is S-adenosylmethionine synthase (Streptococcus agalactiae serotype III (strain NEM316)).